Reading from the N-terminus, the 150-residue chain is Azurin (150 aa).

An N-terminal signal peptide occupies residues 1-21; it reads MFKQVLGGMALMAAFSAPVLA. Residues 22–150 form the Plastocyanin-like domain; sequence AECSVDIAGT…LMKGTLKLVD (129 aa). Cysteines 24 and 47 form a disulfide. Positions 67, 133, 138, and 142 each coordinate Cu cation.

The protein localises to the periplasm. In Bordetella bronchiseptica (strain ATCC BAA-588 / NCTC 13252 / RB50) (Alcaligenes bronchisepticus), this protein is Azurin.